We begin with the raw amino-acid sequence, 412 residues long: Pyruvate dehydrogenase E1 component subunit alpha, mitochondrial (412 aa).

The pyruvate site is built by His104, Tyr130, Arg131, Ala169, Gly177, Val179, Asp208, Gly209, Ala210, Asn237, and Tyr239. The thiamine diphosphate site is built by Tyr130 and Arg131. Gly177, Val179, Asp208, Gly209, Ala210, and Asn237 together coordinate thiamine diphosphate. Asp208 lines the Mg(2+) pocket. Mg(2+) is bound by residues Asn237 and Tyr239. A thiamine diphosphate-binding site is contributed by His304.

As to quaternary structure, tetramer of 2 alpha and 2 beta subunits. The cofactor is thiamine diphosphate. Requires Mg(2+) as cofactor.

The protein localises to the mitochondrion matrix. The enzyme catalyses N(6)-[(R)-lipoyl]-L-lysyl-[protein] + pyruvate + H(+) = N(6)-[(R)-S(8)-acetyldihydrolipoyl]-L-lysyl-[protein] + CO2. With respect to regulation, E1 activity is regulated by phosphorylation (inactivation) and dephosphorylation (activation) of the alpha subunit. Its function is as follows. The pyruvate dehydrogenase complex catalyzes the overall conversion of pyruvate to acetyl-CoA and CO(2). It contains multiple copies of three enzymatic components: pyruvate dehydrogenase (E1), dihydrolipoamide acetyltransferase (E2) and lipoamide dehydrogenase (E3). The polypeptide is Pyruvate dehydrogenase E1 component subunit alpha, mitochondrial (PDA1) (Kluyveromyces lactis (strain ATCC 8585 / CBS 2359 / DSM 70799 / NBRC 1267 / NRRL Y-1140 / WM37) (Yeast)).